We begin with the raw amino-acid sequence, 272 residues long: Imidazole glycerol phosphate synthase subunit HisF (272 aa).

Catalysis depends on residues Asp-12 and Asp-131.

The protein belongs to the HisA/HisF family. In terms of assembly, heterodimer of HisH and HisF.

It is found in the cytoplasm. The enzyme catalyses 5-[(5-phospho-1-deoxy-D-ribulos-1-ylimino)methylamino]-1-(5-phospho-beta-D-ribosyl)imidazole-4-carboxamide + L-glutamine = D-erythro-1-(imidazol-4-yl)glycerol 3-phosphate + 5-amino-1-(5-phospho-beta-D-ribosyl)imidazole-4-carboxamide + L-glutamate + H(+). The protein operates within amino-acid biosynthesis; L-histidine biosynthesis; L-histidine from 5-phospho-alpha-D-ribose 1-diphosphate: step 5/9. Functionally, IGPS catalyzes the conversion of PRFAR and glutamine to IGP, AICAR and glutamate. The HisF subunit catalyzes the cyclization activity that produces IGP and AICAR from PRFAR using the ammonia provided by the HisH subunit. The protein is Imidazole glycerol phosphate synthase subunit HisF of Methanopyrus kandleri (strain AV19 / DSM 6324 / JCM 9639 / NBRC 100938).